Consider the following 141-residue polypeptide: Hemoglobin subunit alpha-A (141 aa).

Positions 1–141 (MLSASDKANV…VGLVLTAKYR (141 aa)) constitute a Globin domain. O2 is bound at residue histidine 58. Histidine 87 contributes to the heme b binding site.

This sequence belongs to the globin family. As to quaternary structure, there are three forms of hemoglobin in Sphenodon: A, A' and D. Hb A is a tetramer of two alpha-A and two beta-1, Hb A' is a tetramer of two alpha-a and two beta-2, Hb D is a tetramer of two alpha-D and two beta-2. Red blood cells.

Its function is as follows. Involved in oxygen transport from the lung to the various peripheral tissues. The polypeptide is Hemoglobin subunit alpha-A (HBAA) (Sphenodon punctatus (Tuatara)).